Consider the following 217-residue polypeptide: Uracil-DNA glycosylase (217 aa).

The Proton acceptor role is filled by aspartate 62.

Belongs to the uracil-DNA glycosylase (UDG) superfamily. UNG family.

Its subcellular location is the cytoplasm. It carries out the reaction Hydrolyzes single-stranded DNA or mismatched double-stranded DNA and polynucleotides, releasing free uracil.. Its function is as follows. Excises uracil residues from the DNA which can arise as a result of misincorporation of dUMP residues by DNA polymerase or due to deamination of cytosine. The protein is Uracil-DNA glycosylase of Streptococcus mutans serotype c (strain ATCC 700610 / UA159).